The following is a 192-amino-acid chain: Thymidine kinase (192 aa).

ATP is bound by residues serine 9–serine 16 and aspartate 87–glutamine 90. Glutamate 88 acts as the Proton acceptor in catalysis. 4 residues coordinate Zn(2+): cysteine 145, cysteine 147, cysteine 182, and histidine 185.

This sequence belongs to the thymidine kinase family. In terms of assembly, homotetramer.

The protein localises to the cytoplasm. The catalysed reaction is thymidine + ATP = dTMP + ADP + H(+). In Vibrio vulnificus (strain CMCP6), this protein is Thymidine kinase.